A 467-amino-acid chain; its full sequence is MKQFMDEDFLLSNDVARTLYYDYAKDQPIFDYHCHLPPKEIAENRQFKDLTEIWLAGDHYKWRAMRSAGVDENLITGNASNYEKYQAWAKTVPLCIGNPIYHWTHLELRRPFGITNTLFNPQSADKIWQECNELLQQPEFSARGIMRQMNVKFSGTTDDPIDSLEYHKAIAEDRDFDIEVAPSWRPDKAVKIELPQFNDYIKQLEQVSDTEINGFDSLKKALSKRLDHFDKRGCKSADQGMEIVRFAPVPDEKELDRILQLRRNEQPLTELQISQFSTALLVWLGAEYCKRNWVMQMHIGALRNNNTRMFKLLGADSGFDSIADRTFAEQLSRLLDAMDQNNQLPKTILYCLNPRDNEMIATMIGNFQTGGIAGKIQFGSGWWFNDQKDGMERQLQQLSQLGLLSQFVGMLTDSRSFLSYTRHEYFRRILCEMIGRWVVNGEAPNDMNLLGNMVKNICFDNAKAYFK.

The protein belongs to the metallo-dependent hydrolases superfamily. Uronate isomerase family.

The catalysed reaction is D-glucuronate = D-fructuronate. It catalyses the reaction aldehydo-D-galacturonate = keto-D-tagaturonate. The protein operates within carbohydrate metabolism; pentose and glucuronate interconversion. In Mannheimia succiniciproducens (strain KCTC 0769BP / MBEL55E), this protein is Uronate isomerase.